A 447-amino-acid chain; its full sequence is Phosphoglucosamine mutase (447 aa).

Catalysis depends on Ser-102, which acts as the Phosphoserine intermediate. Ser-102, Asp-241, Asp-243, and Asp-245 together coordinate Mg(2+). A Phosphoserine modification is found at Ser-102.

The protein belongs to the phosphohexose mutase family. It depends on Mg(2+) as a cofactor. Activated by phosphorylation.

It catalyses the reaction alpha-D-glucosamine 1-phosphate = D-glucosamine 6-phosphate. Its function is as follows. Catalyzes the conversion of glucosamine-6-phosphate to glucosamine-1-phosphate. This chain is Phosphoglucosamine mutase, found in Symbiobacterium thermophilum (strain DSM 24528 / JCM 14929 / IAM 14863 / T).